Reading from the N-terminus, the 1070-residue chain is DNA-directed RNA polymerase subunit beta (1070 aa).

The protein belongs to the RNA polymerase beta chain family. As to quaternary structure, in plastids the minimal PEP RNA polymerase catalytic core is composed of four subunits: alpha, beta, beta', and beta''. When a (nuclear-encoded) sigma factor is associated with the core the holoenzyme is formed, which can initiate transcription.

It localises to the plastid. The protein localises to the chloroplast. It carries out the reaction RNA(n) + a ribonucleoside 5'-triphosphate = RNA(n+1) + diphosphate. In terms of biological role, DNA-dependent RNA polymerase catalyzes the transcription of DNA into RNA using the four ribonucleoside triphosphates as substrates. The protein is DNA-directed RNA polymerase subunit beta of Daucus carota (Wild carrot).